Reading from the N-terminus, the 290-residue chain is Porphobilinogen deaminase (290 aa).

Position 237 is an S-(dipyrrolylmethanemethyl)cysteine (C237).

The protein belongs to the HMBS family. As to quaternary structure, monomer. Dipyrromethane is required as a cofactor.

It catalyses the reaction 4 porphobilinogen + H2O = hydroxymethylbilane + 4 NH4(+). It participates in porphyrin-containing compound metabolism; protoporphyrin-IX biosynthesis; coproporphyrinogen-III from 5-aminolevulinate: step 2/4. Its function is as follows. Tetrapolymerization of the monopyrrole PBG into the hydroxymethylbilane pre-uroporphyrinogen in several discrete steps. This Clostridium botulinum (strain Kyoto / Type A2) protein is Porphobilinogen deaminase.